The sequence spans 179 residues: Natural killer cells antigen CD94 (179 aa).

Over 1 to 10 (MAVFKTTLWW) the chain is Cytoplasmic. Residues 11 to 31 (LISGTLGIICLSLTATLGILL) traverse the membrane as a helical; Signal-anchor for type II membrane protein segment. Residues 32–179 (KNSFTKLSIE…NRYICKQQLI (148 aa)) are Extracellular-facing. 2 disulfide bridges follow: Cys58/Cys70 and Cys61/Cys72. The C-type lectin domain maps to 68–175 (YRCNCYFISS…CEDKNRYICK (108 aa)). Asn83 and Asn132 each carry an N-linked (GlcNAc...) asparagine glycan. 2 disulfide bridges follow: Cys89-Cys174 and Cys152-Cys166.

Can form disulfide-bonded heterodimer with NKG2 family members KLRC1 and KLRC2. KLRD1-KLRC1 heterodimer interacts with peptide-bound MHC-E-B2M heterotrimeric complex. KLRD1 plays a prominent role in directly interacting with MHC-E. KLRD1-KLRC1 interacts with much higher affinity with peptide-bound MHC-E-B2M than KLRD1-KLRC2. Interacts with the adapter protein TYROBP/DAP12; this interaction is required for cell surface expression and cell activation. In terms of tissue distribution, natural killer cells.

The protein resides in the cell membrane. Immune receptor involved in self-nonself discrimination. In complex with KLRC1 or KLRC2 on cytotoxic and regulatory lymphocyte subsets, recognizes non-classical major histocompatibility (MHC) class Ib molecule MHC-E loaded with self-peptides derived from the signal sequence of classical MHC class Ia and non-classical MHC class Ib molecules. Enables cytotoxic cells to monitor the expression of MHC class I molecules in healthy cells and to tolerate self. Primarily functions as a ligand binding subunit as it lacks the capacity to signal. Functionally, KLRD1-KLRC1 acts as an immune inhibitory receptor. Key inhibitory receptor on natural killer (NK) cells that regulates their activation and effector functions. Dominantly counteracts T cell receptor signaling on a subset of memory/effector CD8-positive T cells as part of an antigen-driven response to avoid autoimmunity. On intraepithelial CD8-positive gamma-delta regulatory T cells triggers TGFB1 secretion, which in turn limits the cytotoxic programming of intraepithelial CD8-positive alpha-beta T cells, distinguishing harmless from pathogenic antigens. In MHC-E-rich tumor microenvironment, acts as an immune inhibitory checkpoint and may contribute to progressive loss of effector functions of NK cells and tumor-specific T cells, a state known as cell exhaustion. Upon MHC-E-peptide binding, transmits intracellular signals through KLRC1 immunoreceptor tyrosine-based inhibition motifs (ITIMs) by recruiting INPP5D/SHIP-1 and INPPL1/SHIP-2 tyrosine phosphatases to ITIMs, and ultimately opposing signals transmitted by activating receptors through dephosphorylation of proximal signaling molecules. In terms of biological role, KLRD1-KLRC2 acts as an immune activating receptor. On cytotoxic lymphocyte subsets recognizes MHC-E loaded with signal sequence-derived peptides from non-classical MHC class Ib MHC-G molecules, likely playing a role in the generation and effector functions of adaptive NK cells and in maternal-fetal tolerance during pregnancy. Regulates the effector functions of terminally differentiated cytotoxic lymphocyte subsets, and in particular may play a role in adaptive NK cell response to viral infection. Upon MHC-E-peptide binding, transmits intracellular signals via the adapter protein TYROBP/DAP12, triggering the phosphorylation of proximal signaling molecules and cell activation. The polypeptide is Natural killer cells antigen CD94 (KLRD1) (Pongo pygmaeus (Bornean orangutan)).